Consider the following 118-residue polypeptide: Non-specific lipid-transfer protein (118 aa).

The N-terminal stretch at 1–25 (MDCIRILWSVAVGLLLVSWRPTMFA) is a signal peptide. 4 disulfides stabilise this stretch: Cys30–Cys76, Cys40–Cys53, Cys54–Cys98, and Cys74–Cys113.

This sequence belongs to the plant LTP family.

In terms of biological role, plant non-specific lipid-transfer proteins transfer phospholipids as well as galactolipids across membranes. May play a role in wax or cutin deposition in the cell walls of expanding epidermal cells and certain secretory tissues. The chain is Non-specific lipid-transfer protein from Ambrosia artemisiifolia (Common ragweed).